The sequence spans 134 residues: Transcription antitermination protein NusB (134 aa).

Belongs to the NusB family.

Involved in transcription antitermination. Required for transcription of ribosomal RNA (rRNA) genes. Binds specifically to the boxA antiterminator sequence of the ribosomal RNA (rrn) operons. The polypeptide is Transcription antitermination protein NusB (Shewanella loihica (strain ATCC BAA-1088 / PV-4)).